A 185-amino-acid polypeptide reads, in one-letter code: uncharacterized protein (185 aa).

2 helical membrane-spanning segments follow: residues 1 to 19 (MLNI…TSSA) and 105 to 125 (AGFI…TMDV).

It localises to the membrane. This is an uncharacterized protein from Caenorhabditis elegans.